The sequence spans 462 residues: Argininosuccinate lyase (462 aa).

It belongs to the lyase 1 family. Argininosuccinate lyase subfamily.

It localises to the cytoplasm. The enzyme catalyses 2-(N(omega)-L-arginino)succinate = fumarate + L-arginine. It participates in amino-acid biosynthesis; L-arginine biosynthesis; L-arginine from L-ornithine and carbamoyl phosphate: step 3/3. The protein is Argininosuccinate lyase of Leuconostoc citreum (strain KM20).